Consider the following 55-residue polypeptide: Large ribosomal subunit protein bL33 (55 aa).

The protein belongs to the bacterial ribosomal protein bL33 family.

The polypeptide is Large ribosomal subunit protein bL33 (Burkholderia ambifaria (strain MC40-6)).